The following is a 344-amino-acid chain: UDP-N-acetylenolpyruvoylglucosamine reductase (344 aa).

The 171-residue stretch at isoleucine 19 to asparagine 189 folds into the FAD-binding PCMH-type domain. The active site involves arginine 165. Catalysis depends on serine 235, which acts as the Proton donor. Glutamate 331 is an active-site residue.

The protein belongs to the MurB family. It depends on FAD as a cofactor.

The protein localises to the cytoplasm. The catalysed reaction is UDP-N-acetyl-alpha-D-muramate + NADP(+) = UDP-N-acetyl-3-O-(1-carboxyvinyl)-alpha-D-glucosamine + NADPH + H(+). The protein operates within cell wall biogenesis; peptidoglycan biosynthesis. In terms of biological role, cell wall formation. This is UDP-N-acetylenolpyruvoylglucosamine reductase from Buchnera aphidicola subsp. Schizaphis graminum (strain Sg).